The primary structure comprises 73 residues: Putative membrane protein insertion efficiency factor (73 aa).

Belongs to the UPF0161 family.

The protein localises to the cell inner membrane. In terms of biological role, could be involved in insertion of integral membrane proteins into the membrane. The sequence is that of Putative membrane protein insertion efficiency factor from Phocaeicola vulgatus (strain ATCC 8482 / DSM 1447 / JCM 5826 / CCUG 4940 / NBRC 14291 / NCTC 11154) (Bacteroides vulgatus).